Reading from the N-terminus, the 102-residue chain is MDRQNIRIRLKAFDHRVLDHSTREIVNTAKRTGATVRGPIPLPTLIEKFTVNRSPHVDKKSREQFEIRTHKRVLDIVDPTPQTVDALMKLDLSAGVDVEIKL.

The protein belongs to the universal ribosomal protein uS10 family. Part of the 30S ribosomal subunit.

Functionally, involved in the binding of tRNA to the ribosomes. This is Small ribosomal subunit protein uS10 from Caulobacter sp. (strain K31).